The primary structure comprises 261 residues: uncharacterized protein (261 aa).

Residues 1–22 are disordered; it reads MGVADNEYISVPTGEPVQQQPQ. 3 helical membrane passes run 92 to 112, 122 to 142, and 147 to 167; these read IIILFFSQQFLLFSIAPILGL, IVVMHFLTAAFYYIFSVIFLF, and INTILLSILFSIIFTLSLMNY.

It is found in the membrane. This is an uncharacterized protein from Dictyostelium discoideum (Social amoeba).